A 130-amino-acid chain; its full sequence is Small ribosomal subunit protein uS9 (130 aa).

Residues 109 to 130 (RAKERKKYGLKAARRAPQFSKR) are disordered. Basic residues predominate over residues 111-130 (KERKKYGLKAARRAPQFSKR).

The protein belongs to the universal ribosomal protein uS9 family.

The protein is Small ribosomal subunit protein uS9 of Heliobacterium modesticaldum (strain ATCC 51547 / Ice1).